Here is a 264-residue protein sequence, read N- to C-terminus: Small ribosomal subunit protein eS1 (264 aa).

Position 34 is an N6-acetyllysine; alternate (Lys34). Residue Lys34 forms a Glycyl lysine isopeptide (Lys-Gly) (interchain with G-Cter in SUMO2); alternate linkage. The residue at position 56 (Lys56) is an N6-acetyllysine. At Tyr155 the chain carries ADP-ribosyltyrosine. The segment at 232 to 264 (HGEGGSSGKTTGDETGAKVERADGYEPPVQESV) is disordered. Ser237 carries the post-translational modification Phosphoserine. Positions 242–255 (TGDETGAKVERADG) are enriched in basic and acidic residues. Lys249 is modified (N6-acetyllysine; alternate). Lys249 is covalently cross-linked (Glycyl lysine isopeptide (Lys-Gly) (interchain with G-Cter in SUMO2); alternate). Phosphotyrosine is present on Tyr256. Ser263 carries the phosphoserine modification.

It belongs to the eukaryotic ribosomal protein eS1 family. As to quaternary structure, component of the small ribosomal subunit. Mature ribosomes consist of a small (40S) and a large (60S) subunit. The 40S subunit contains about 33 different proteins and 1 molecule of RNA (18S). The 60S subunit contains about 49 different proteins and 3 molecules of RNA (28S, 5.8S and 5S). Identified in a IGF2BP1-dependent mRNP granule complex containing untranslated mRNAs. Binds with high affinity to IPO4. Interacts with DDIT3. Part of the small subunit (SSU) processome, composed of more than 70 proteins and the RNA chaperone small nucleolar RNA (snoRNA) U3. The protein designated S3b has the same amino acid sequence as S3a except that it lacks the C-terminal 12 residues. It is probable that S3a is converted by proteolysis, either physiologically or fortuitously, to S3b. In terms of processing, ADP-ribosylated at Tyr-155 by PARP1 in presence of HPF1.

Its subcellular location is the cytoplasm. It localises to the nucleus. It is found in the nucleolus. Component of the small ribosomal subunit. The ribosome is a large ribonucleoprotein complex responsible for the synthesis of proteins in the cell. Part of the small subunit (SSU) processome, first precursor of the small eukaryotic ribosomal subunit. During the assembly of the SSU processome in the nucleolus, many ribosome biogenesis factors, an RNA chaperone and ribosomal proteins associate with the nascent pre-rRNA and work in concert to generate RNA folding, modifications, rearrangements and cleavage as well as targeted degradation of pre-ribosomal RNA by the RNA exosome. May play a role during erythropoiesis through regulation of transcription factor DDIT3. The sequence is that of Small ribosomal subunit protein eS1 (Rps3a) from Rattus norvegicus (Rat).